The primary structure comprises 727 residues: Translation initiation factor IF-2, mitochondrial (727 aa).

The transit peptide at 1–29 (MNQKLLKLENLLRFHTIYRQLHSLCQRRA) directs the protein to the mitochondrion. The tr-type G domain occupies 178-348 (PRSPVVTIMG…VALAEMLELK (171 aa)). A G1 region spans residues 187 to 194 (GHVDHGKT). 187–194 (GHVDHGKT) is a binding site for GTP. Residues 212-216 (GITQH) form a G2 region. GTP contacts are provided by residues 234–237 (DTPG) and 288–291 (NKCD). The G3 stretch occupies residues 234 to 237 (DTPG). Positions 288 to 291 (NKCD) are G4. Residues 324 to 326 (SAL) form a G5 region. Phosphothreonine is present on Thr688.

Belongs to the TRAFAC class translation factor GTPase superfamily. Classic translation factor GTPase family. IF-2 subfamily. Monomer. As to expression, expressed in all tissues examined. Highest level in skeletal muscle.

The protein localises to the mitochondrion. Functionally, one of the essential components for the initiation of protein synthesis. Protects formylmethionyl-tRNA from spontaneous hydrolysis and promotes its binding to the 30S ribosomal subunits. Also involved in the hydrolysis of GTP during the formation of the 70S ribosomal complex. This is Translation initiation factor IF-2, mitochondrial (MTIF2) from Homo sapiens (Human).